The following is a 116-amino-acid chain: Large ribosomal subunit protein bL21c (116 aa).

Belongs to the bacterial ribosomal protein bL21 family. In terms of assembly, part of the 50S ribosomal subunit.

Its subcellular location is the plastid. The protein localises to the chloroplast. This protein binds to 23S rRNA. This Marchantia polymorpha (Common liverwort) protein is Large ribosomal subunit protein bL21c.